We begin with the raw amino-acid sequence, 84 residues long: Small ribosomal subunit protein uS17 (84 aa).

This sequence belongs to the universal ribosomal protein uS17 family. In terms of assembly, part of the 30S ribosomal subunit.

One of the primary rRNA binding proteins, it binds specifically to the 5'-end of 16S ribosomal RNA. The protein is Small ribosomal subunit protein uS17 of Erwinia tasmaniensis (strain DSM 17950 / CFBP 7177 / CIP 109463 / NCPPB 4357 / Et1/99).